The following is a 314-amino-acid chain: Ribosomal protein L11 methyltransferase (314 aa).

S-adenosyl-L-methionine is bound by residues T161, G182, D204, and N248.

This sequence belongs to the methyltransferase superfamily. PrmA family.

It localises to the cytoplasm. The catalysed reaction is L-lysyl-[protein] + 3 S-adenosyl-L-methionine = N(6),N(6),N(6)-trimethyl-L-lysyl-[protein] + 3 S-adenosyl-L-homocysteine + 3 H(+). Functionally, methylates ribosomal protein L11. The chain is Ribosomal protein L11 methyltransferase from Listeria welshimeri serovar 6b (strain ATCC 35897 / DSM 20650 / CCUG 15529 / CIP 8149 / NCTC 11857 / SLCC 5334 / V8).